The following is a 421-amino-acid chain: Imidazolonepropionase (421 aa).

Fe(3+) contacts are provided by H81 and H83. Residues H81 and H83 each contribute to the Zn(2+) site. Positions 90, 153, and 186 each coordinate 4-imidazolone-5-propanoate. N-formimidoyl-L-glutamate is bound at residue Y153. H251 serves as a coordination point for Fe(3+). H251 is a binding site for Zn(2+). E254 provides a ligand contact to 4-imidazolone-5-propanoate. Residue D326 coordinates Fe(3+). Residue D326 participates in Zn(2+) binding. N328 and G330 together coordinate N-formimidoyl-L-glutamate. S331 lines the 4-imidazolone-5-propanoate pocket.

The protein belongs to the metallo-dependent hydrolases superfamily. HutI family. Requires Zn(2+) as cofactor. Fe(3+) serves as cofactor.

Its subcellular location is the cytoplasm. The catalysed reaction is 4-imidazolone-5-propanoate + H2O = N-formimidoyl-L-glutamate. Its pathway is amino-acid degradation; L-histidine degradation into L-glutamate; N-formimidoyl-L-glutamate from L-histidine: step 3/3. In terms of biological role, catalyzes the hydrolytic cleavage of the carbon-nitrogen bond in imidazolone-5-propanoate to yield N-formimidoyl-L-glutamate. It is the third step in the universal histidine degradation pathway. The sequence is that of Imidazolonepropionase from Streptococcus pyogenes serotype M2 (strain MGAS10270).